Consider the following 136-residue polypeptide: MARTKQTARKSTGGKAPRKQLATKAAAKSAPATGGVKKPHRYRPGTVALREIRRYQKSTELLIRKLPFQRLVREIAQDFKTDLRFQSSAVLALQEASEAYLVGLFEDTNLCAIHAKRVTIMPKDIQLARRIRGERA.

Residues 1–42 are disordered; that stretch reads MARTKQTARKSTGGKAPRKQLATKAAAKSAPATGGVKKPHRY. Lys-5 bears the N6-methylated lysine mark. Position 10 is an N6-acetyllysine; alternate (Lys-10). Lys-10 carries the N6-methylated lysine; alternate modification. Phosphoserine is present on Ser-11. Residues Lys-15 and Lys-24 each carry the N6-acetyllysine modification. A compositionally biased stretch (low complexity) spans 22 to 33; it reads ATKAAAKSAPAT. N6-methylated lysine is present on residues Lys-28, Lys-37, and Lys-80.

It belongs to the histone H3 family. The nucleosome is a histone octamer containing two molecules each of H2A, H2B, H3 and H4 assembled in one H3-H4 heterotetramer and two H2A-H2B heterodimers. The octamer wraps approximately 147 bp of DNA. Post-translationally, acetylation is generally linked to gene activation. Methylation at Lys-5 is linked to gene activation. Methylation at Lys-10 is linked to gene repression.

The protein localises to the nucleus. Its subcellular location is the chromosome. Its function is as follows. Core component of nucleosome. Nucleosomes wrap and compact DNA into chromatin, limiting DNA accessibility to the cellular machineries which require DNA as a template. Histones thereby play a central role in transcription regulation, DNA repair, DNA replication and chromosomal stability. DNA accessibility is regulated via a complex set of post-translational modifications of histones, also called histone code, and nucleosome remodeling. In Acropora formosa (Staghorn coral), this protein is Histone H3.